We begin with the raw amino-acid sequence, 278 residues long: Fe(II)/2-oxoglutarate-dependent dioxygenase nvfI (278 aa).

This sequence belongs to the asaB hydroxylase/desaturase family.

It catalyses the reaction asnovolin A + 2-oxoglutarate + 2 O2 = fumigatonoid A + succinate + CO2. It participates in secondary metabolite biosynthesis; terpenoid biosynthesis. In terms of biological role, fe(II)/2-oxoglutarate-dependent dioxygenase; part of the gene cluster that mediates the biosynthesis of novofumigatonin, a heavily oxygenated meroterpenoid containing a unique orthoester moiety. The first step of the pathway is the synthesis of 3,5-dimethylorsellinic acid (DMOA) by the polyketide synthase nvfA via condensation of one acetyl-CoA starter unit with 3 malonyl-CoA units and 2 methylations. DMOA is then converted to farnesyl-DMOA by the farnesyltransferase nvfB. Epoxydation by FAD-dependent monooxygenase nvfK, followed by a protonation-initiated cyclization catalyzed by the terpene cyclase nvfL leads to the production of asnavolin H. The short chain dehydrogenase nvfC then as a 3-OH dehydrogenase of asnovolin H to yield chemesin D. There are two branches to synthesize asnovolin A from chemesin D. In one branch, chemesin D undergoes Baeyer-Villiger oxidation by nvfH, methylation by nvfJ, and enoyl reduction by the nvfM D enoylreductase that reduces the double bond between C-5'and C-6', to form respectively asnovolin I, asnovolin K, and asnovolin A. In the other branch, the methylation precedes the Baeyer-Villiger oxidation and the enoyl reduction to yield asnovolin A via the asnovolin J intermediate. Asnovolin A is further converted to fumigatonoid A by the Fe(II)/2-oxoglutarate-dependent dioxygenase nvfI that catalyzes an endoperoxidation reaction. The alpha/beta hydrolase nvfD then acts as an epimerase that converts fumigatonoid A to its C-5' epimer, which then undergoes spontaneous or nvfD-catalyzed lactonization. The following step utilizes the ketoreductase nvfG to produce fumigatonoid B. The dioxygenase nvfE further converts fumigatonoid B into fumigatonoid C. Finally the Fe(II)/2-oxoglutarate-dependent dioxygenase nvfF catalyzes two rounds of oxidation to transform fumigatonoid C into the end product, novofumigatonin A. The chain is Fe(II)/2-oxoglutarate-dependent dioxygenase nvfI from Aspergillus novofumigatus (strain IBT 16806).